The following is a 64-amino-acid chain: Small ribosomal subunit protein bS21 (64 aa).

The interval E37–A64 is disordered. The span at R53 to A64 shows a compositional bias: basic residues.

The protein belongs to the bacterial ribosomal protein bS21 family.

The polypeptide is Small ribosomal subunit protein bS21 (Syntrophotalea carbinolica (strain DSM 2380 / NBRC 103641 / GraBd1) (Pelobacter carbinolicus)).